The sequence spans 274 residues: Glutamate--cysteine ligase regulatory subunit (274 aa).

Serine 59 is subject to Phosphoserine. Lysine 263 is subject to N6-acetyllysine.

The protein belongs to the aldo/keto reductase family. Glutamate--cysteine ligase light chain subfamily. Heterodimer of a catalytic heavy chain and a regulatory light chain. As to expression, most abundant in kidney. Also found in liver and testis.

The protein operates within sulfur metabolism; glutathione biosynthesis; glutathione from L-cysteine and L-glutamate: step 1/2. The chain is Glutamate--cysteine ligase regulatory subunit (Gclm) from Rattus norvegicus (Rat).